The chain runs to 599 residues: Glutamine--fructose-6-phosphate aminotransferase [isomerizing] (599 aa).

Cysteine 2 functions as the Nucleophile; for GATase activity in the catalytic mechanism. One can recognise a Glutamine amidotransferase type-2 domain in the interval 2-223 (CGIIGYIGNE…DRDIVILRKE (222 aa)). SIS domains are found at residues 286 to 423 (LGKE…IIGK) and 452 to 589 (IAEE…VDKP). Residue lysine 594 is the For Fru-6P isomerization activity of the active site.

In terms of assembly, homodimer.

Its subcellular location is the cytoplasm. It catalyses the reaction D-fructose 6-phosphate + L-glutamine = D-glucosamine 6-phosphate + L-glutamate. Its function is as follows. Catalyzes the first step in hexosamine metabolism, converting fructose-6P into glucosamine-6P using glutamine as a nitrogen source. This Methanococcus maripaludis (strain DSM 14266 / JCM 13030 / NBRC 101832 / S2 / LL) protein is Glutamine--fructose-6-phosphate aminotransferase [isomerizing] (glmS).